The following is a 249-amino-acid chain: Phosphoribosylaminoimidazole-succinocarboxamide synthase (249 aa).

This sequence belongs to the SAICAR synthetase family.

The enzyme catalyses 5-amino-1-(5-phospho-D-ribosyl)imidazole-4-carboxylate + L-aspartate + ATP = (2S)-2-[5-amino-1-(5-phospho-beta-D-ribosyl)imidazole-4-carboxamido]succinate + ADP + phosphate + 2 H(+). Its pathway is purine metabolism; IMP biosynthesis via de novo pathway; 5-amino-1-(5-phospho-D-ribosyl)imidazole-4-carboxamide from 5-amino-1-(5-phospho-D-ribosyl)imidazole-4-carboxylate: step 1/2. The polypeptide is Phosphoribosylaminoimidazole-succinocarboxamide synthase (Roseiflexus sp. (strain RS-1)).